Consider the following 619-residue polypeptide: DBH-like monooxygenase protein 2 (619 aa).

Positions 1–21 are cleaved as a signal peptide; it reads MACVLLFRLFLLLVLAAFSQG. The Extracellular segment spans residues 22 to 594; it reads KRLGPTSPLR…LSGSNTATLR (573 aa). In terms of domain architecture, DOMON spans 40–156; it reads RAVFLRWDFD…DTMRVLAAYG (117 aa). Tyr209 is an active-site residue. Disulfide bonds link Cys211–Cys261 and Cys248–Cys271. Cu cation is bound by residues His241 and His242. Residue Asn250 is glycosylated (N-linked (GlcNAc...) asparagine). 3 residues coordinate Cu cation: His309, His390, and His392. 2 disulfides stabilise this stretch: Cys366–Cys481 and Cys444–Cys466. His390 is a catalytic residue. N-linked (GlcNAc...) asparagine glycosylation is present at Asn405. Met465 is a Cu cation binding site. An N-linked (GlcNAc...) asparagine glycan is attached at Asn477. The helical transmembrane segment at 595–615 threads the bilayer; it reads PLPMIAVLFLQGSLSCLLAML. Topologically, residues 616–619 are cytoplasmic; that stretch reads QTGV.

It belongs to the copper type II ascorbate-dependent monooxygenase family. It depends on Cu(2+) as a cofactor. In terms of tissue distribution, expressed at low levels in thymus and testis.

It localises to the membrane. The protein is DBH-like monooxygenase protein 2 (Moxd2) of Mus musculus (Mouse).